Here is a 151-residue protein sequence, read N- to C-terminus: Lipoprotein signal peptidase (151 aa).

Helical transmembrane passes span 54-74 (GQMWFFYVVTTIIVGVIIYLI) and 83-103 (LLKIALGLVLGGAIGNFIDRL). Catalysis depends on residues D110 and D125. A helical transmembrane segment spans residues 120-140 (IFNIADSALTIGVGLFLLNIL).

This sequence belongs to the peptidase A8 family.

It localises to the cell membrane. It carries out the reaction Release of signal peptides from bacterial membrane prolipoproteins. Hydrolyzes -Xaa-Yaa-Zaa-|-(S,diacylglyceryl)Cys-, in which Xaa is hydrophobic (preferably Leu), and Yaa (Ala or Ser) and Zaa (Gly or Ala) have small, neutral side chains.. It participates in protein modification; lipoprotein biosynthesis (signal peptide cleavage). Its function is as follows. This protein specifically catalyzes the removal of signal peptides from prolipoproteins. This is Lipoprotein signal peptidase from Shouchella clausii (strain KSM-K16) (Alkalihalobacillus clausii).